Here is a 187-residue protein sequence, read N- to C-terminus: Virulence protein ATR13 (187 aa).

Positions 1-19 (MRLVHAVLLPGIIVFVSNG) are cleaved as a signal peptide. The RxLR motif lies at 38–41 (RQLR). Residues 50–92 (LSRASFGLGKAQDPLDKFFRKIINSRKPIETSYSAKGIHEKII) are leucine heptad repeat region. 4 repeat units span residues 93–103 (KAYDRHVFESK), 104–114 (KAHDRHVSKSK), 115–125 (KAHGRHVSKSK), and 126–136 (MAHDRHVSKSE). Residues 93 to 136 (KAYDRHVFESKKAHDRHVSKSKKAHGRHVSKSKMAHDRHVSKSE) form a 4 X 11 AA tandem repeats region. The tract at residues 104 to 136 (KAHDRHVSKSKKAHGRHVSKSKMAHDRHVSKSE) is disordered. Basic residues predominate over residues 111–125 (SKSKKAHGRHVSKSK). Basic and acidic residues predominate over residues 126–136 (MAHDRHVSKSE). The highly variable C-terminus domain stretch occupies residues 137 to 187 (KAPIQYASVADYLKKIYPGTDIERIVSTLKRHDEVGAKDLGAKLQTAVASQ).

The protein belongs to the RxLR effector family.

Its subcellular location is the secreted. It is found in the host nucleus. The protein localises to the host nucleolus. It localises to the host cytoplasm. Functionally, secreted effector that acts as an elicitor of hypersensitive response (HR) specifically on plants carrying defense protein RPP13. Recognition of ATR13 by RPP13 initiates defense responses that are effective against oomycete, bacterial and viral pathogens. Due to high polymorphism, ATR13-Emoy2 does not recognize RPP13-Nd, the RPP13 defense protein from Arabidopsis thaliana ecotype Niederzenz. ATR13-Emoy2 is recognized by RPP13 variants RPP13-UKID44, RPP13-UKID65 and RPP13-UKID71. The sequence is that of Virulence protein ATR13 from Hyaloperonospora arabidopsidis (strain Emoy2) (Downy mildew agent).